The sequence spans 424 residues: Histidinol dehydrogenase (424 aa).

Residues Tyr121, Gln183, and Asn206 each coordinate NAD(+). Substrate is bound by residues Ser229, Gln251, and His254. 2 residues coordinate Zn(2+): Gln251 and His254. Active-site proton acceptor residues include Glu319 and His320. Substrate is bound by residues His320, Asp353, Glu407, and His412. Asp353 is a Zn(2+) binding site. Position 412 (His412) interacts with Zn(2+).

It belongs to the histidinol dehydrogenase family. Requires Zn(2+) as cofactor.

It catalyses the reaction L-histidinol + 2 NAD(+) + H2O = L-histidine + 2 NADH + 3 H(+). Its pathway is amino-acid biosynthesis; L-histidine biosynthesis; L-histidine from 5-phospho-alpha-D-ribose 1-diphosphate: step 9/9. In terms of biological role, catalyzes the sequential NAD-dependent oxidations of L-histidinol to L-histidinaldehyde and then to L-histidine. This chain is Histidinol dehydrogenase, found in Geobacillus kaustophilus (strain HTA426).